The chain runs to 227 residues: ATP synthase F(0) complex subunit a (227 aa).

6 helical membrane passes run 9-29 (FASPSYLGIPLIAIAIALPWV), 69-89 (WALLLASLMIFLITINMLGLL), 98-118 (QLSLNMGFAVPLWLATVIIGM), 132-152 (EGTPIPLIPVLIIIETISLFI), 165-185 (LTAGHLLIQLIATAVFVLMPM), and 190-210 (AILTATVLFLLTLLEVAVAMI).

The protein belongs to the ATPase A chain family. In terms of assembly, component of the ATP synthase complex composed at least of ATP5F1A/subunit alpha, ATP5F1B/subunit beta, ATP5MC1/subunit c (homooctomer), MT-ATP6/subunit a, MT-ATP8/subunit 8, ATP5ME/subunit e, ATP5MF/subunit f, ATP5MG/subunit g, ATP5MK/subunit k, ATP5MJ/subunit j, ATP5F1C/subunit gamma, ATP5F1D/subunit delta, ATP5F1E/subunit epsilon, ATP5PF/subunit F6, ATP5PB/subunit b, ATP5PD/subunit d, ATP5PO/subunit OSCP. ATP synthase complex consists of a soluble F(1) head domain (subunits alpha(3) and beta(3)) - the catalytic core - and a membrane F(0) domain - the membrane proton channel (subunits c, a, 8, e, f, g, k and j). These two domains are linked by a central stalk (subunits gamma, delta, and epsilon) rotating inside the F1 region and a stationary peripheral stalk (subunits F6, b, d, and OSCP). Interacts with DNAJC30; interaction is direct.

The protein localises to the mitochondrion inner membrane. The enzyme catalyses H(+)(in) = H(+)(out). Its function is as follows. Subunit a, of the mitochondrial membrane ATP synthase complex (F(1)F(0) ATP synthase or Complex V) that produces ATP from ADP in the presence of a proton gradient across the membrane which is generated by electron transport complexes of the respiratory chain. ATP synthase complex consist of a soluble F(1) head domain - the catalytic core - and a membrane F(1) domain - the membrane proton channel. These two domains are linked by a central stalk rotating inside the F(1) region and a stationary peripheral stalk. During catalysis, ATP synthesis in the catalytic domain of F(1) is coupled via a rotary mechanism of the central stalk subunits to proton translocation. With the subunit c (ATP5MC1), forms the proton-conducting channel in the F(0) domain, that contains two crucial half-channels (inlet and outlet) that facilitate proton movement from the mitochondrial intermembrane space (IMS) into the matrix. Protons are taken up via the inlet half-channel and released through the outlet half-channel, following a Grotthuss mechanism. In Carassius auratus (Goldfish), this protein is ATP synthase F(0) complex subunit a.